A 204-amino-acid chain; its full sequence is MGAYKYMQELWRKKQSNVMRFLLRVRCWQYRQLSSLHRAPRPTRPDKARRLGYKAKQGYVIYRIRVRRGGRKRPVPKGATYGKPVHHGVNQIKFARSLQSVAEERAGRHCGGLRVLNSYWVGEDSTYKFFEVILIDTFHKAIRRNPDTQWITKAVHKHREMRGLTSAGKKSRGLGKGHKFHLTIGGSRRAAWKRRNTLQLHRYR.

This sequence belongs to the eukaryotic ribosomal protein eL15 family. In terms of assembly, component of the large ribosomal subunit.

It localises to the cytoplasm. Its function is as follows. Component of the large ribosomal subunit. The ribosome is a large ribonucleoprotein complex responsible for the synthesis of proteins in the cell. The sequence is that of Large ribosomal subunit protein eL15 (rpl15) from Hypophthalmichthys nobilis (Bighead carp).